Here is a 168-residue protein sequence, read N- to C-terminus: uncharacterized protein (168 aa).

A run of 2 helical transmembrane segments spans residues 41-61 (LLPW…LFFI) and 133-153 (KFVI…FFVL).

It is found in the cell membrane. This is an uncharacterized protein from Thermotoga maritima (strain ATCC 43589 / DSM 3109 / JCM 10099 / NBRC 100826 / MSB8).